A 395-amino-acid chain; its full sequence is Tryptophan--tRNA ligase (395 aa).

Residues 8-10 (RPT) and 16-17 (GH) contribute to the ATP site. Positions 9–17 (PTGKLHLGH) match the 'HIGH' region motif. Residues 117 to 179 (RLTDLEKEFK…EIEPEILKRL (63 aa)) form an insert region. Asp204 lines the L-tryptophan pocket. Residues 216–218 (GED), Ile254, and 261–265 (KMSKS) each bind ATP. Positions 261 to 265 (KMSKS) match the 'KMSKS' region motif.

It belongs to the class-I aminoacyl-tRNA synthetase family. Homodimer.

Its subcellular location is the cytoplasm. It catalyses the reaction tRNA(Trp) + L-tryptophan + ATP = L-tryptophyl-tRNA(Trp) + AMP + diphosphate + H(+). In terms of biological role, catalyzes the attachment of tryptophan to tRNA(Trp). This chain is Tryptophan--tRNA ligase, found in Aquifex aeolicus (strain VF5).